A 309-amino-acid polypeptide reads, in one-letter code: Porphobilinogen deaminase (309 aa).

Cys-243 carries the S-(dipyrrolylmethanemethyl)cysteine modification.

Belongs to the HMBS family. As to quaternary structure, monomer. The cofactor is dipyrromethane.

It catalyses the reaction 4 porphobilinogen + H2O = hydroxymethylbilane + 4 NH4(+). It participates in porphyrin-containing compound metabolism; protoporphyrin-IX biosynthesis; coproporphyrinogen-III from 5-aminolevulinate: step 2/4. Tetrapolymerization of the monopyrrole PBG into the hydroxymethylbilane pre-uroporphyrinogen in several discrete steps. The polypeptide is Porphobilinogen deaminase (Deinococcus geothermalis (strain DSM 11300 / CIP 105573 / AG-3a)).